We begin with the raw amino-acid sequence, 376 residues long: WD repeat-containing protein 86 (376 aa).

WD repeat units follow at residues 13-52 (DHRG…CCAL), 55-94 (GHES…QVYR), 95-132 (GHTS…MSRE), 135-188 (GHRN…CHQT), 191-232 (GHTG…RVFR), 234-272 (HRGS…RTFT), 274-310 (HRRN…LRRV), and 313-350 (GHTF…GAPR).

This Homo sapiens (Human) protein is WD repeat-containing protein 86 (WDR86).